The primary structure comprises 290 residues: Outer dense fiber protein 4 (290 aa).

A Phosphoserine modification is found at Ser28. A run of 4 helical transmembrane segments spans residues 44 to 64 (AQVVASEFSLVAFLLLLVMVF), 125 to 145 (PVFGVAKISFTLAIGLGFVLT), 164 to 184 (LIGIILSFCEVTLIFLTLLLF), and 201 to 221 (IGWSYFIGWLVLILYFTCGIL). Positions 247 to 290 (GPESLVSPSQTPSSQENSQESPKDDQKPSSPDKVVSPPQPDTTG) are disordered. A compositionally biased stretch (polar residues) spans 252–266 (VSPSQTPSSQENSQE).

Expressed in testis.

It localises to the membrane. Functionally, component of the outer dense fibers (ODF) of spermatozoa which could be involved in sperm tail structure, sperm movement and general organization of cellular cytoskeleton. The sequence is that of Outer dense fiber protein 4 (Odf4) from Mus musculus (Mouse).